Reading from the N-terminus, the 317-residue chain is DNA repair nuclease/redox regulator APEX1 (317 aa).

The tract at residues 1–32 (MPKRGKRAAAEDGEEPKSEPETKKSKGAAKKT) is necessary for interaction with YBX1, binding to RNA, association together with NPM1 to rRNA, endoribonuclease activity on abasic RNA and localization in the nucleoli. Residues 1 to 57 (MPKRGKRAAAEDGEEPKSEPETKKSKGAAKKTEKEAAGEGPVLYEDPPDQKTSASGK) form a disordered region. Lys-6 bears the N6-acetyllysine; by EP300 mark. The Nuclear localization signal (NLS) motif lies at 8–12 (AAAED). The span at 15–37 (EPKSEPETKKSKGAAKKTEKEAA) shows a compositional bias: basic and acidic residues. Ser-18 is modified (phosphoserine). A necessary for interaction with NPM1 and for efficient rRNA binding region spans residues 22-32 (TKKSKGAAKKT). Lys-26, Lys-30, Lys-31, and Lys-34 each carry N6-acetyllysine. At Ser-53 the chain carries Phosphoserine. The short motif at 63 to 79 (ICSWNVDGLRAWIKKKG) is the Nuclear export signal (NES) element. Cys-64 carries the S-nitrosocysteine; alternate modification. A disulfide bond links Cys-64 and Cys-92. Residue Asp-69 coordinates Mg(2+). Cys-92 is modified (S-nitrosocysteine; alternate). Glu-95 contributes to the Mg(2+) binding site. Residue Tyr-170 is part of the active site. Residue Lys-196 is modified to N6-acetyllysine. Residues Asp-209 and Asn-211 each contribute to the Mg(2+) site. The Proton donor/acceptor role is filled by Asp-209. A Phosphothreonine; by CDK5 modification is found at Thr-232. The segment at 288–317 (HSLLPALCDSKIRSKALGSDHCPITLYLAL) is mitochondrial targeting sequence (MTS). Asp-307 contributes to the Mg(2+) binding site. Residue Cys-309 is modified to S-nitrosocysteine.

This sequence belongs to the DNA repair enzymes AP/ExoA family. As to quaternary structure, monomer. Homodimer; disulfide-linked. Component of the SET complex, composed of at least APEX1, SET, ANP32A, HMGB2, NME1 and TREX1. Associates with the dimer XRCC5/XRCC6 in a DNA-dependent manner. Interacts with SIRT1; the interaction is increased in the context of genotoxic stress. Interacts with HDAC1, HDAC2 and HDAC3; the interactions are not dependent on the APEX1 acetylation status. Interacts with XRCC1; the interaction is induced by SIRT1 and increased with the APEX1 acetylated form. Interacts with NPM1 (via N-terminal domain); the interaction is RNA-dependent and decreases in hydrogen peroxide-damaged cells. Interacts (via N-terminus) with YBX1 (via C-terminus); the interaction is increased in presence of APEX1 acetylated. Interacts with HNRNPL; the interaction is DNA-dependent. Interacts (via N-terminus) with KPNA1 and KPNA2. Interacts with TXN; the interaction stimulates the FOS/JUN AP-1 complex DNA-binding activity in a redox-dependent manner. Interacts with GZMA, KRT8, MDM2, POLB, PRDX6, PRPF19, RPLP0, TOMM20 and WDR77. Binds to CDK5. Mg(2+) serves as cofactor. The cofactor is Mn(2+). In terms of processing, phosphorylated. Phosphorylation by kinase PKC or casein kinase CK2 results in enhanced redox activity that stimulates binding of the FOS/JUN AP-1 complex to its cognate binding site. AP-endodeoxyribonuclease activity is not affected by CK2-mediated phosphorylation. Phosphorylation of Thr-232 by CDK5 in response to MPP(+)/MPTP (1-methyl-4-phenylpyridinium) reduces AP-endodeoxyribonuclease activity resulting in accumulation of DNA damage and contributing to neuronal death. Post-translationally, acetylated on Lys-6. Acetylation is increased by the transcriptional coactivator EP300 acetyltransferase, genotoxic agents like H(2)O(2) and methyl methanesulfonate (MMS). Acetylation increases its binding affinity to the negative calcium response element (nCaRE) DNA promoter. The acetylated form induces a stronger binding of YBX1 to the Y-box sequence in the MDR1 promoter than the unacetylated form. Deacetylated on lysines. Lys-6 is deacetylated by SIRT1. Cleaved at Lys-30 by granzyme A to create the mitochondrial form; leading in reduction of binding to DNA, AP endodeoxyribonuclease activity, redox activation of transcription factors and to enhanced cell death. Cleaved by granzyme K; leading to intracellular ROS accumulation and enhanced cell death after oxidative stress. In terms of processing, cys-64 and Cys-92 are nitrosylated in response to nitric oxide (NO) and lead to the exposure of the nuclear export signal (NES). Post-translationally, ubiquitinated by MDM2; leading to translocation to the cytoplasm and proteasomal degradation.

It localises to the nucleus. The protein localises to the nucleolus. The protein resides in the nucleus speckle. Its subcellular location is the endoplasmic reticulum. It is found in the cytoplasm. It localises to the mitochondrion. The enzyme catalyses a deoxyribonucleotide-2'-deoxyribose-5'-monophosphate-DNA + H2O = a 5'-end 2'-deoxyribose-5'-monophosphate-DNA + a 3'-end 2'-deoxyribonucleotide-DNA + H(+). It carries out the reaction Exonucleolytic cleavage in the 3'- to 5'-direction to yield nucleoside 5'-phosphates.. It catalyses the reaction a 3'-end 2'-deoxyribonucleotide-3'-phosphoglycolate-DNA + H2O = 2-phosphoglycolate + a 3'-end 2'-deoxyribonucleotide-DNA + H(+). The catalysed reaction is a 3'-end 2'-deoxyribonucleotide-8-oxoguanine-DNA + H2O = 8-oxo-dGMP + a 3'-end 2'-deoxyribonucleotide-DNA + H(+). With respect to regulation, NPM1 stimulates endodeoxyribonuclease activity on double-stranded DNA with AP sites, but inhibits endoribonuclease activity on single-stranded RNA containing AP sites. Multifunctional protein that plays a central role in the cellular response to oxidative stress. The two major activities of APEX1 are DNA repair and redox regulation of transcriptional factors. Functions as an apurinic/apyrimidinic (AP) endodeoxyribonuclease in the base excision repair (BER) pathway of DNA lesions induced by oxidative and alkylating agents. Initiates repair of AP sites in DNA by catalyzing hydrolytic incision of the phosphodiester backbone immediately adjacent to the damage, generating a single-strand break with 5'-deoxyribose phosphate and 3'-hydroxyl ends. Also incises at AP sites in the DNA strand of DNA/RNA hybrids, single-stranded DNA regions of R-loop structures, and single-stranded RNA molecules. Operates at switch sites of immunoglobulin (Ig) constant regions where it mediates Ig isotype class switch recombination. Processes AP sites induced by successive action of AICDA and UNG. Generates staggered nicks in opposite DNA strands resulting in the formation of double-strand DNA breaks that are finally resolved via non-homologous end joining repair pathway. Has 3'-5' exodeoxyribonuclease activity on mismatched deoxyribonucleotides at the 3' termini of nicked or gapped DNA molecules during short-patch BER. Possesses DNA 3' phosphodiesterase activity capable of removing lesions (such as phosphoglycolate and 8-oxoguanine) blocking the 3' side of DNA strand breaks. Also acts as an endoribonuclease involved in the control of single-stranded RNA metabolism. Plays a role in regulating MYC mRNA turnover by preferentially cleaving in between UA and CA dinucleotides of the MYC coding region determinant (CRD). In association with NMD1, plays a role in the rRNA quality control process during cell cycle progression. Acts as a loading factor for POLB onto non-incised AP sites in DNA and stimulates the 5'-terminal deoxyribose 5'-phosphate (dRp) excision activity of POLB. Exerts reversible nuclear redox activity to regulate DNA binding affinity and transcriptional activity of transcriptional factors by controlling the redox status of their DNA-binding domain, such as the FOS/JUN AP-1 complex after exposure to IR. Involved in calcium-dependent down-regulation of parathyroid hormone (PTH) expression by binding to negative calcium response elements (nCaREs). Together with HNRNPL or the dimer XRCC5/XRCC6, associates with nCaRE, acting as an activator of transcriptional repression. May also play a role in the epigenetic regulation of gene expression by participating in DNA demethylation. Stimulates the YBX1-mediated MDR1 promoter activity, when acetylated at Lys-6 and Lys-7, leading to drug resistance. Plays a role in protection from granzyme-mediated cellular repair leading to cell death. Binds DNA and RNA. Associates, together with YBX1, on the MDR1 promoter. Together with NPM1, associates with rRNA. This Rattus norvegicus (Rat) protein is DNA repair nuclease/redox regulator APEX1 (Apex1).